The following is a 358-amino-acid chain: MKCILLNQAEELPIEFLPKDGVYGKGKLFDSRNMEIENFTESDILQDARRAAEAHRRARYRVQSIVRPGITLLEIVRSIEDSTRTLLKGERNNGIGFPAGMSMNSCAAHYTVNPGEQDIVLKEDDVLKIDFGTHSDGRIMDSAFTVAFKENLEPLLVAAREGTETGIKSLGVDVRVCDIGRDINEVISSYEVEIGGRMWPIRPISDLHGHSISQFRIHGGISIPAVNNRDTTRIKGDSFYAVETFATTGKGSIDDRPPCSHFVLNTYKSRKLFNKDLIKVYEFVKDSLGTLPFSPRHLDYYGLVKGGSLKSVNLLTMMGLLTPYPPLNDIDGCKVAQFEHTVYLSEHGKEVLTRGDDY.

Residue His109 participates in substrate binding. 3 residues coordinate a divalent metal cation: Asp130, Asp141, and His210. A substrate-binding site is contributed by His218. 2 residues coordinate a divalent metal cation: Glu243 and Glu339.

It belongs to the peptidase M24A family. Methionine aminopeptidase eukaryotic type 2 subfamily. It depends on Co(2+) as a cofactor. Zn(2+) is required as a cofactor. Mn(2+) serves as cofactor. The cofactor is Fe(2+).

The protein resides in the cytoplasm. It catalyses the reaction Release of N-terminal amino acids, preferentially methionine, from peptides and arylamides.. In terms of biological role, cotranslationally removes the N-terminal methionine from nascent proteins. The N-terminal methionine is often cleaved when the second residue in the primary sequence is small and uncharged (Met-Ala-, Cys, Gly, Pro, Ser, Thr, or Val). In Encephalitozoon cuniculi (strain GB-M1) (Microsporidian parasite), this protein is Methionine aminopeptidase 2.